The primary structure comprises 139 residues: UPF0310 protein RSal33209_2865 (139 aa).

This sequence belongs to the UPF0310 family.

This is UPF0310 protein RSal33209_2865 from Renibacterium salmoninarum (strain ATCC 33209 / DSM 20767 / JCM 11484 / NBRC 15589 / NCIMB 2235).